The following is a 98-amino-acid chain: Integration host factor subunit alpha (98 aa).

The interval 54-74 is disordered; the sequence is LRDKSSRPGRNPKTGESVPVS.

Belongs to the bacterial histone-like protein family. Heterodimer of an alpha and a beta chain.

Functionally, this protein is one of the two subunits of integration host factor, a specific DNA-binding protein that functions in genetic recombination as well as in transcriptional and translational control. This is Integration host factor subunit alpha (ihfA) from Pasteurella multocida (strain Pm70).